Here is a 538-residue protein sequence, read N- to C-terminus: (R)-citramalate synthase (538 aa).

The region spanning 3-268 is the Pyruvate carboxyltransferase domain; that stretch reads IKVYDTTLRD…IPKENLKKLF (266 aa).

The protein belongs to the alpha-IPM synthase/homocitrate synthase family.

It carries out the reaction pyruvate + acetyl-CoA + H2O = (3R)-citramalate + CoA + H(+). It participates in amino-acid biosynthesis; L-isoleucine biosynthesis; 2-oxobutanoate from pyruvate: step 1/3. Functionally, catalyzes the condensation of pyruvate and acetyl-coenzyme A to form (R)-citramalate. This Thermotoga maritima (strain ATCC 43589 / DSM 3109 / JCM 10099 / NBRC 100826 / MSB8) protein is (R)-citramalate synthase.